We begin with the raw amino-acid sequence, 442 residues long: D-serine dehydratase (442 aa).

N6-(pyridoxal phosphate)lysine is present on Lys118.

Belongs to the serine/threonine dehydratase family. DsdA subfamily. In terms of assembly, monomer. Pyridoxal 5'-phosphate is required as a cofactor.

The enzyme catalyses D-serine = pyruvate + NH4(+). The sequence is that of D-serine dehydratase from Shigella flexneri serotype 5b (strain 8401).